Consider the following 251-residue polypeptide: Probable phosphatase Sputw3181_2734 (251 aa).

Zn(2+) is bound by residues His-8, His-10, His-16, His-41, Glu-74, His-102, His-132, Asp-193, and His-195.

The protein belongs to the PHP family. Requires Zn(2+) as cofactor.

This Shewanella sp. (strain W3-18-1) protein is Probable phosphatase Sputw3181_2734.